The sequence spans 137 residues: Bombinin-like peptides 2 (137 aa).

The signal sequence occupies residues 1–18 (MNFKYIVAVSILIASAYA). Asparagine 70 is subject to Asparagine amide. The interval 92–112 (DSLEHPEEASEKETRGFNQEE) is disordered. Isoleucine 136 is subject to Isoleucine amide.

This sequence belongs to the bombinin family. As to expression, expressed by the skin glands.

The protein localises to the secreted. Functionally, bombinin-like peptide 2 has antimicrobial activity, but no hemolytic activity. Preliminary evidence indicates that this peptide does not lyse and thus kill the bacteria by its antimicrobial activity. Bombinin H2 has antibacterial and hemolytic activity. This chain is Bombinin-like peptides 2, found in Bombina variegata (Yellow-bellied toad).